A 506-amino-acid chain; its full sequence is AAA-ATPase At4g25835 (506 aa).

The N-terminal stretch at 1-20 (MKEYWTSLASLLGVLAFCQS) is a signal peptide. Position 244–251 (244–251 (GPPGTGKS)) interacts with ATP. The tract at residues 462–506 (GKSRVQNVSLEEQENRAFDSLYAEENGGEEEEIEDNICKSSDDCS) is disordered. Residues 487-496 (NGGEEEEIED) show a composition bias toward acidic residues. Residues 497 to 506 (NICKSSDDCS) show a composition bias toward basic and acidic residues.

Belongs to the AAA ATPase family. BCS1 subfamily. Requires Mg(2+) as cofactor.

It carries out the reaction ATP + H2O = ADP + phosphate + H(+). In Arabidopsis thaliana (Mouse-ear cress), this protein is AAA-ATPase At4g25835.